Here is a 296-residue protein sequence, read N- to C-terminus: Gamma-D-glutamyl-L-lysine dipeptidyl-peptidase (296 aa).

Residues Y90, 199–201, and 218–219 each bind substrate; these read DCS and DA. In terms of domain architecture, NlpC/P60 spans 170–295; that stretch reads KGTAEDIIQT…ELCAVRRCFS (126 aa). C200 functions as the Nucleophile in the catalytic mechanism. The Proton acceptor role is filled by H253. Residue H265 is part of the active site.

It belongs to the peptidase C40 family.

It catalyses the reaction The enzyme releases L-Ala-gamma-D-Glu dipeptides from cell wall peptides via cleavage of an L-Ala-gamma-D-Glu-|-L-Lys bond.. The protein operates within cell wall degradation; peptidoglycan degradation. In terms of biological role, specifically hydrolyzes gamma-D-glutamyl-L-lysine bonds in murein peptides, releasing L-Ala-D-Glu. In Bacillus subtilis (strain 168), this protein is Gamma-D-glutamyl-L-lysine dipeptidyl-peptidase (ykfC).